A 657-amino-acid polypeptide reads, in one-letter code: tRNA 5-methylaminomethyl-2-thiouridine biosynthesis bifunctional protein MnmC (657 aa).

The tract at residues 1 to 233 (MPRGLILATP…KRDMTVAAFP (233 aa)) is tRNA (mnm(5)s(2)U34)-methyltransferase. Residues 256–657 (LGAGLAGCSV…RALRHGKHAA (402 aa)) form an FAD-dependent cmnm(5)s(2)U34 oxidoreductase region.

In the N-terminal section; belongs to the methyltransferase superfamily. tRNA (mnm(5)s(2)U34)-methyltransferase family. It in the C-terminal section; belongs to the DAO family. Requires FAD as cofactor.

It localises to the cytoplasm. It catalyses the reaction 5-aminomethyl-2-thiouridine(34) in tRNA + S-adenosyl-L-methionine = 5-methylaminomethyl-2-thiouridine(34) in tRNA + S-adenosyl-L-homocysteine + H(+). Catalyzes the last two steps in the biosynthesis of 5-methylaminomethyl-2-thiouridine (mnm(5)s(2)U) at the wobble position (U34) in tRNA. Catalyzes the FAD-dependent demodification of cmnm(5)s(2)U34 to nm(5)s(2)U34, followed by the transfer of a methyl group from S-adenosyl-L-methionine to nm(5)s(2)U34, to form mnm(5)s(2)U34. The chain is tRNA 5-methylaminomethyl-2-thiouridine biosynthesis bifunctional protein MnmC from Ralstonia nicotianae (strain ATCC BAA-1114 / GMI1000) (Ralstonia solanacearum).